The primary structure comprises 266 residues: Early E1A protein (266 aa).

Positions 39 to 47 are interaction with RB1 in competition with E2F1; that stretch reads MSLHEMYDL. The short motif at 94–98 is the PXLXP motif, interaction with host ZMYND11 element; the sequence is PELQP. An LXCXE motif, interaction with host RB1 motif is present at residues 103 to 107; sequence LFCYE. Residues 160–180 fold into a zinc finger; the sequence is CSSCDYHRKTSGCPEILCSLC. The disordered stretch occupies residues 193-244; the sequence is VSDSEPDEPDSTTADSNHGSPPTLRCTPPRDLPRPVPVKASPGKRPAVNSLH. The segment covering 203 to 212 has biased composition (polar residues); that stretch reads STTADSNHGS. Positions 255–259 match the PXDLS motif, CTBP-binding motif; sequence PLDLS. Positions 261–265 match the Nuclear localization signal motif; the sequence is KRSRS.

It belongs to the adenoviridae E1A protein family. In terms of assembly, interacts with host UBE2I; this interaction interferes with polySUMOylation. Interacts with host RB1; this interaction induces the aberrant dissociation of RB1-E2F1 complex thereby disrupting the activity of RB1 and activating E2F1-regulated genes. Interacts with host ATF7; the interaction enhances ATF7-mediated viral transactivation activity which requires the zinc binding domains of both proteins. Isoform early E1A 32 kDa protein and isoform early E1A 26 kDa protein interact (via N-terminus) with CUL1 and E3 ubiquitin ligase RBX1; these interactions inhibit RBX1-CUL1-dependent elongation reaction of ubiquitin chains and attenuate ubiquitination of SCF(FBXW7) target proteins. Interacts (via PXLXP motif) with host ZMYND11/BS69 (via MYND-type zinc finger); this interaction inhibits E1A mediated transactivation. Interacts with host EP300; this interaction stimulates the acetylation of RB1 by recruiting EP300 and RB1 into a multimeric-protein complex. Interacts with host CTBP1 and CTBP2; this interaction seems to potentiate viral replication. Interacts with host DCAF7. Interacts with host DYRK1A. Interacts with host KPNA4; this interaction allows E1A import into the host nucleus. Interacts with host EP400; this interaction stabilizes MYC. Interacts with host TBP protein; this interaction probably disrupts the TBP-TATA complex.

It is found in the host nucleus. Plays a role in viral genome replication by driving entry of quiescent cells into the cell cycle. Stimulation of progression from G1 to S phase allows the virus to efficiently use the cellular DNA replicating machinery to achieve viral genome replication. E1A protein has both transforming and trans-activating activities. Induces the disassembly of the E2F1 transcription factor from RB1 by direct competition for the same binding site on RB1, with subsequent transcriptional activation of E2F1-regulated S-phase genes and of the E2 region of the adenoviral genome. Release of E2F1 leads to the ARF-mediated inhibition of MDM2 and causes TP53/p53 to accumulate because it is not targeted for degradation by MDM2-mediated ubiquitination anymore. This increase in TP53, in turn, would arrest the cell proliferation and direct its death but this effect is counteracted by the viral protein E1B-55K. Inactivation of the ability of RB1 to arrest the cell cycle is critical for cellular transformation, uncontrolled cellular growth and proliferation induced by viral infection. Interaction with RBX1 and CUL1 inhibits ubiquitination of the proteins targeted by SCF(FBXW7) ubiquitin ligase complex, and may be linked to unregulated host cell proliferation. The tumorigenesis-restraining activity of E1A may be related to the disruption of the host CtBP-CtIP complex through the CtBP binding motif. This chain is Early E1A protein, found in Simian adenovirus serotype 7 (SAdV-7).